The primary structure comprises 464 residues: Asparagine--tRNA ligase (464 aa).

The protein belongs to the class-II aminoacyl-tRNA synthetase family. In terms of assembly, homodimer.

It is found in the cytoplasm. The enzyme catalyses tRNA(Asn) + L-asparagine + ATP = L-asparaginyl-tRNA(Asn) + AMP + diphosphate + H(+). The sequence is that of Asparagine--tRNA ligase from Azobacteroides pseudotrichonymphae genomovar. CFP2.